The primary structure comprises 169 residues: S-ribosylhomocysteine lyase (169 aa).

Residues histidine 54, histidine 58, and cysteine 128 each coordinate Fe cation.

Belongs to the LuxS family. As to quaternary structure, homodimer. The cofactor is Fe cation.

It carries out the reaction S-(5-deoxy-D-ribos-5-yl)-L-homocysteine = (S)-4,5-dihydroxypentane-2,3-dione + L-homocysteine. Its function is as follows. Involved in the synthesis of autoinducer 2 (AI-2) which is secreted by bacteria and is used to communicate both the cell density and the metabolic potential of the environment. The regulation of gene expression in response to changes in cell density is called quorum sensing. Catalyzes the transformation of S-ribosylhomocysteine (RHC) to homocysteine (HC) and 4,5-dihydroxy-2,3-pentadione (DPD). In Shewanella piezotolerans (strain WP3 / JCM 13877), this protein is S-ribosylhomocysteine lyase.